Consider the following 477-residue polypeptide: MSPEDPQETQPLLRPPEARTPRGRRVFLASFAAALGPLSFGFALGYSSPAIPSLRRTAPPALRLGDNAASWFGAVVTLGAAAGGILGGWLLDRAGRKLSLLLCTVPFVTGFAVITAARDVWMLLGGRLLTGLACGVASLVAPVYISEIAYPAVRGLLGSCVQLMVVTGILLAYVAGWVLEWRWLAVLGCVPPTLMLLLMCYMPETPRFLLTQHQYQEAMAALRFLWGSEEGWEEPPVGAEHQGFQLALLRRPGIYKPLIIGISLMVFQQLSGVNAIMFYANSIFEEAKFKDSSLASVTVGIIQVLFTAVAALIMDRAGRRLLLALSGVIMVFSMSAFGTYFKLTQSLPSNSSHVGLVPIAAEPVDVQVGLAWLAVGSMCLFIAGFAVGWGPIPWLLMSEIFPLHVKGVATGICVLTNWFMAFLVTKEFSSVMEMLRPYGAFWLTAAFCALSVLFTLTVVPETKGRTLEQVTAHFEGR.

Topologically, residues 1-25 are cytoplasmic; the sequence is MSPEDPQETQPLLRPPEARTPRGRR. The short motif at 12–13 is the Dileucine internalization motif element; that stretch reads LL. The helical transmembrane segment at 26-46 threads the bilayer; that stretch reads VFLASFAAALGPLSFGFALGY. Topologically, residues 47 to 70 are extracellular; that stretch reads SSPAIPSLRRTAPPALRLGDNAAS. Residues 71–91 traverse the membrane as a helical segment; it reads WFGAVVTLGAAAGGILGGWLL. At 92 to 96 the chain is on the cytoplasmic side; sequence DRAGR. Residues 97–117 traverse the membrane as a helical segment; the sequence is KLSLLLCTVPFVTGFAVITAA. Over 118–127 the chain is Extracellular; it reads RDVWMLLGGR. The helical transmembrane segment at 128–148 threads the bilayer; the sequence is LLTGLACGVASLVAPVYISEI. The Cytoplasmic segment spans residues 149-156; that stretch reads AYPAVRGL. Residues 157-177 form a helical membrane-spanning segment; it reads LGSCVQLMVVTGILLAYVAGW. Gln162 provides a ligand contact to D-glucose. Residues 178–182 are Extracellular-facing; sequence VLEWR. Residues 183–203 form a helical membrane-spanning segment; sequence WLAVLGCVPPTLMLLLMCYMP. Residues 204–257 are Cytoplasmic-facing; sequence ETPRFLLTQHQYQEAMAALRFLWGSEEGWEEPPVGAEHQGFQLALLRRPGIYKP. The helical transmembrane segment at 258–278 threads the bilayer; sequence LIIGISLMVFQQLSGVNAIMF. Residues 268 to 269 and Asn274 each bind D-glucose; that span reads QQ. Residues 279–293 are Extracellular-facing; that stretch reads YANSIFEEAKFKDSS. The helical transmembrane segment at 294–314 threads the bilayer; it reads LASVTVGIIQVLFTAVAALIM. At 315–320 the chain is on the cytoplasmic side; it reads DRAGRR. A helical membrane pass occupies residues 321 to 341; that stretch reads LLLALSGVIMVFSMSAFGTYF. Residues 342 to 367 are Extracellular-facing; that stretch reads KLTQSLPSNSSHVGLVPIAAEPVDVQ. N-linked (GlcNAc...) asparagine glycosylation occurs at Asn350. A helical membrane pass occupies residues 368–388; sequence VGLAWLAVGSMCLFIAGFAVG. The Cytoplasmic segment spans residues 389 to 404; it reads WGPIPWLLMSEIFPLH. Trp394 provides a ligand contact to D-glucose. The helical transmembrane segment at 405 to 425 threads the bilayer; the sequence is VKGVATGICVLTNWFMAFLVT. The Extracellular portion of the chain corresponds to 426–438; that stretch reads KEFSSVMEMLRPY. A helical transmembrane segment spans residues 439 to 459; the sequence is GAFWLTAAFCALSVLFTLTVV. The Cytoplasmic portion of the chain corresponds to 460–477; the sequence is PETKGRTLEQVTAHFEGR.

The protein belongs to the major facilitator superfamily. Sugar transporter (TC 2.A.1.1) family. Glucose transporter subfamily. Interacts with AP2B1. Also able to mediate the transport of dehydroascorbate. Highest level of expression in placenta and testis. Highly expressed in adult and pubertal testis, but not prepubertal testis. Lower levels of expression in brain, liver, heart, kidney, fat and skeletal muscle.

Its subcellular location is the cell membrane. It localises to the cytoplasmic vesicle membrane. It catalyses the reaction D-glucose(out) = D-glucose(in). It carries out the reaction D-fructose(out) = D-fructose(in). The catalysed reaction is L-dehydroascorbate(out) = L-dehydroascorbate(in). The enzyme catalyses alpha,alpha-trehalose(in) = alpha,alpha-trehalose(out). Inhibited by cytochalasin B. Functionally, insulin-regulated facilitative hexose transporter that mediates the transport of glucose and fructose. Facilitates hepatic influx of dietary trehalose, which in turn inhibits glucose and fructose influx triggering a starvation signal and hepatic autophagy through activation of AMPK and ULK1. Also able to mediate the transport of dehydroascorbate. This chain is Solute carrier family 2, facilitated glucose transporter member 8, found in Mus musculus (Mouse).